A 550-amino-acid chain; its full sequence is Hydroxylamine reductase (550 aa).

[2Fe-2S] cluster-binding residues include C3, C6, C18, and C25. The hybrid [4Fe-2O-2S] cluster site is built by H249, E273, C317, C405, C433, C458, E492, and K494. C405 carries the post-translational modification Cysteine persulfide.

It belongs to the HCP family. It depends on [2Fe-2S] cluster as a cofactor. Requires hybrid [4Fe-2O-2S] cluster as cofactor.

Its subcellular location is the cytoplasm. It catalyses the reaction A + NH4(+) + H2O = hydroxylamine + AH2 + H(+). Catalyzes the reduction of hydroxylamine to form NH(3) and H(2)O. The polypeptide is Hydroxylamine reductase (Salmonella enteritidis PT4 (strain P125109)).